Consider the following 284-residue polypeptide: Probable palmitoyltransferase ZDHHC24 (284 aa).

Over 1-18 (MGESWAARGAEGAPARMP) the chain is Cytoplasmic. The chain crosses the membrane as a helical span at residues 19–39 (LVLTALWAAVVVLELAYVMVL). At 40–52 (GPGPPPLGPLARA) the chain is on the extracellular side. The chain crosses the membrane as a helical span at residues 53–73 (LQLALAAYQLLNLLGNVVLFL). The Cytoplasmic segment spans residues 74 to 137 (RSDPSIRGVM…GCCVGFHNYR (64 aa)). In terms of domain architecture, DHHC spans 94–144 (AYCYQCQSQVPPRSGHCSACRVCILRRDHHCRLLGCCVGFHNYRPFLCLLL). The S-palmitoyl cysteine intermediate role is filled by cysteine 124. A helical transmembrane segment spans residues 138–158 (PFLCLLLHSAGVLLHISVLLG). The Extracellular segment spans residues 159–166 (PALSALLQ). The helical transmembrane segment at 167-187 (AHSALYTVALLLLPWLMLLTG) threads the bilayer. At 188–195 (KVSLAQFA) the chain is on the cytoplasmic side. Residues 196 to 216 (LAFVVDTCVAGALLCGAGLLF) traverse the membrane as a helical segment. Topologically, residues 217–284 (HGMLLLRGQT…TPGDVGLVTS (68 aa)) are extracellular.

This sequence belongs to the DHHC palmitoyltransferase family.

It is found in the membrane. It carries out the reaction L-cysteinyl-[protein] + hexadecanoyl-CoA = S-hexadecanoyl-L-cysteinyl-[protein] + CoA. Probable palmitoyltransferase that could catalyze the addition of palmitate onto various protein substrates. In Mus musculus (Mouse), this protein is Probable palmitoyltransferase ZDHHC24.